A 548-amino-acid polypeptide reads, in one-letter code: Probable malate:quinone oxidoreductase (548 aa).

It belongs to the MQO family. Requires FAD as cofactor.

It catalyses the reaction (S)-malate + a quinone = a quinol + oxaloacetate. It functions in the pathway carbohydrate metabolism; tricarboxylic acid cycle; oxaloacetate from (S)-malate (quinone route): step 1/1. This Escherichia coli O6:K15:H31 (strain 536 / UPEC) protein is Probable malate:quinone oxidoreductase.